The following is a 217-amino-acid chain: Putative thymidylate synthase (217 aa).

The active site involves C139.

It belongs to the thymidylate synthase family. Archaeal-type ThyA subfamily. In terms of assembly, monomer.

Its subcellular location is the cytoplasm. It functions in the pathway pyrimidine metabolism; dTTP biosynthesis. May catalyze the biosynthesis of dTMP using an unknown cosubstrate. The protein is Putative thymidylate synthase of Methanococcoides burtonii (strain DSM 6242 / NBRC 107633 / OCM 468 / ACE-M).